The chain runs to 89 residues: Acylphosphatase (89 aa).

An Acylphosphatase-like domain is found at 3-89; sequence RFTARVAGLV…QSDLTDFRRK (87 aa). Residues arginine 18 and asparagine 36 contribute to the active site.

This sequence belongs to the acylphosphatase family.

It carries out the reaction an acyl phosphate + H2O = a carboxylate + phosphate + H(+). The protein is Acylphosphatase (acyP) of Frankia casuarinae (strain DSM 45818 / CECT 9043 / HFP020203 / CcI3).